The sequence spans 572 residues: uncharacterized protein (572 aa).

The next 12 helical transmembrane spans lie at 77–97 (MIAI…SSLS), 102–122 (ASII…VYAL), 145–165 (PAWG…TFPL), 180–200 (INSA…NLFG), 209–229 (FILS…AIII), 259–279 (FCSV…IGLA), 297–317 (VFWR…LLIS), 341–361 (ANIK…VVSV), 392–412 (LGRP…AYIN), 431–451 (ALAG…HIIF), 478–498 (IGLF…LFPI), and 507–527 (FFQG…YKIY).

The protein belongs to the amino acid-polyamine-organocation (APC) superfamily.

It is found in the membrane. This is an uncharacterized protein from Schizosaccharomyces pombe (strain 972 / ATCC 24843) (Fission yeast).